The following is a 256-amino-acid chain: Ubiquinone/menaquinone biosynthesis C-methyltransferase UbiE (256 aa).

Positions 1–19 (MQNRSSSPDSSSAGNTHFG) are enriched in polar residues. A disordered region spans residues 1-24 (MQNRSSSPDSSSAGNTHFGFQSVP). Residues Thr-81, Asp-102, and 128-129 (DA) contribute to the S-adenosyl-L-methionine site.

Belongs to the class I-like SAM-binding methyltransferase superfamily. MenG/UbiE family.

The enzyme catalyses a 2-demethylmenaquinol + S-adenosyl-L-methionine = a menaquinol + S-adenosyl-L-homocysteine + H(+). It catalyses the reaction a 2-methoxy-6-(all-trans-polyprenyl)benzene-1,4-diol + S-adenosyl-L-methionine = a 5-methoxy-2-methyl-3-(all-trans-polyprenyl)benzene-1,4-diol + S-adenosyl-L-homocysteine + H(+). It participates in quinol/quinone metabolism; menaquinone biosynthesis; menaquinol from 1,4-dihydroxy-2-naphthoate: step 2/2. Its pathway is cofactor biosynthesis; ubiquinone biosynthesis. Methyltransferase required for the conversion of demethylmenaquinol (DMKH2) to menaquinol (MKH2) and the conversion of 2-polyprenyl-6-methoxy-1,4-benzoquinol (DDMQH2) to 2-polyprenyl-3-methyl-6-methoxy-1,4-benzoquinol (DMQH2). This Bordetella avium (strain 197N) protein is Ubiquinone/menaquinone biosynthesis C-methyltransferase UbiE.